The sequence spans 158 residues: Low molecular weight phosphotyrosine protein phosphatase (158 aa).

Ala-2 carries the post-translational modification N-acetylalanine. The active-site Nucleophile is the Cys-13. Residue Arg-19 is part of the active site. The Proton donor role is filled by Asp-130. Residues Tyr-132 and Tyr-133 each carry the phosphotyrosine modification.

The protein belongs to the low molecular weight phosphotyrosine protein phosphatase family.

It localises to the cytoplasm. It carries out the reaction O-phospho-L-tyrosyl-[protein] + H2O = L-tyrosyl-[protein] + phosphate. It catalyses the reaction a phosphate monoester + H2O = an alcohol + phosphate. Acts on tyrosine phosphorylated proteins, low-MW aryl phosphates and natural and synthetic acyl phosphates. The polypeptide is Low molecular weight phosphotyrosine protein phosphatase (ACP1) (Gallus gallus (Chicken)).